Consider the following 338-residue polypeptide: Ferrochelatase (338 aa).

His-210 and Glu-291 together coordinate Fe cation.

Belongs to the ferrochelatase family.

The protein resides in the cytoplasm. It catalyses the reaction heme b + 2 H(+) = protoporphyrin IX + Fe(2+). The protein operates within porphyrin-containing compound metabolism; protoheme biosynthesis; protoheme from protoporphyrin-IX: step 1/1. Functionally, catalyzes the ferrous insertion into protoporphyrin IX. In Helicobacter acinonychis (strain Sheeba), this protein is Ferrochelatase.